A 342-amino-acid polypeptide reads, in one-letter code: tRNA-dihydrouridine(20/20a) synthase (342 aa).

FMN is bound by residues 10-12 (PMV) and Q63. C93 (proton donor) is an active-site residue. FMN contacts are provided by residues K132, H164, 203–205 (NGG), and 225–226 (GR). Basic and acidic residues predominate over residues 313-331 (EEEVGEEGEKEKPGPRGQR). The tract at residues 313–342 (EEEVGEEGEKEKPGPRGQREAAPGPAREGV) is disordered.

Belongs to the Dus family. DusA subfamily. Requires FMN as cofactor.

It carries out the reaction 5,6-dihydrouridine(20) in tRNA + NADP(+) = uridine(20) in tRNA + NADPH + H(+). It catalyses the reaction 5,6-dihydrouridine(20) in tRNA + NAD(+) = uridine(20) in tRNA + NADH + H(+). The catalysed reaction is 5,6-dihydrouridine(20a) in tRNA + NADP(+) = uridine(20a) in tRNA + NADPH + H(+). The enzyme catalyses 5,6-dihydrouridine(20a) in tRNA + NAD(+) = uridine(20a) in tRNA + NADH + H(+). In terms of biological role, catalyzes the synthesis of 5,6-dihydrouridine (D), a modified base found in the D-loop of most tRNAs, via the reduction of the C5-C6 double bond in target uridines. Specifically modifies U20 and U20a in tRNAs. This is tRNA-dihydrouridine(20/20a) synthase (dus) from Thermus thermophilus (strain ATCC 27634 / DSM 579 / HB8).